Here is a 387-residue protein sequence, read N- to C-terminus: MSHRKYEAPRHGHLGFLPRKRAASIRGRVKAFPKDDKSKPVALTSFLGYKAGMTTIVRDLDRPGSKFHKREIVEAVSVVDTPPMVVVGVVGYIETPRGLRSLTTVWAEHLSDEIKRRFYKNWYKSKKKAFTKYSAKYAQDGAAIERELARIKKYASVVRVLAHTQVRKTPLVQKKAHLAEIQLNGGSVSEKVDWAREHFEKTVSVDSVFEQNEMIDVIAVTKGHGFEGVTHRWGTKKLPRKTHRGLRKVACIGAWHPAHVMWTVARAGQNGYHHRTSINHKVYRIGKGGDEGNAATEFDRTKKTITPMGGFVHYGAVNNDFVMVKGSIPGTRKRVVTLRKSLYTSTSRRALEEVNLKWIDTASKFGKGRFQTPAEKHAFMGTLKKDL.

Belongs to the universal ribosomal protein uL3 family.

Its subcellular location is the cytoplasm. The polypeptide is Large ribosomal subunit protein uL3 (RPL3) (Eremothecium gossypii (strain ATCC 10895 / CBS 109.51 / FGSC 9923 / NRRL Y-1056) (Yeast)).